Consider the following 911-residue polypeptide: DNA polymerase I (911 aa).

The 5'-3' exonuclease domain maps to 186–280 (VTPAQYPDLA…DTLRLQPWDR (95 aa)). Residues 320 to 497 (RGGLLESGTV…LAAALDAELD (178 aa)) form the 3'-5' exonuclease domain.

It belongs to the DNA polymerase type-A family. As to quaternary structure, single-chain monomer with multiple functions.

It carries out the reaction DNA(n) + a 2'-deoxyribonucleoside 5'-triphosphate = DNA(n+1) + diphosphate. In addition to polymerase activity, this DNA polymerase exhibits 3'-5' and 5'-3' exonuclease activity. The chain is DNA polymerase I (polA) from Mycobacterium leprae (strain TN).